The primary structure comprises 142 residues: Hemoglobin subunit alpha (142 aa).

Positions 2–142 constitute a Globin domain; it reads VLSSADKNNV…VSTVLTSKYR (141 aa). Ser-4 is modified (phosphoserine). N6-succinyllysine is present on residues Lys-8 and Lys-12. N6-acetyllysine; alternate is present on Lys-17. Lys-17 is modified (N6-succinyllysine; alternate). At Tyr-25 the chain carries Phosphotyrosine. The residue at position 36 (Ser-36) is a Phosphoserine. N6-succinyllysine is present on Lys-41. At Ser-50 the chain carries Phosphoserine. His-59 is a binding site for O2. A heme b-binding site is contributed by His-88. Ser-103 carries the post-translational modification Phosphoserine. Thr-109 bears the Phosphothreonine mark. Position 125 is a phosphoserine (Ser-125). A phosphothreonine mark is found at Thr-135 and Thr-138. Position 139 is a phosphoserine (Ser-139).

This sequence belongs to the globin family. As to quaternary structure, heterotetramer of two alpha chains and two beta chains. Red blood cells.

Functionally, involved in oxygen transport from the lung to the various peripheral tissues. Its function is as follows. Hemopressin acts as an antagonist peptide of the cannabinoid receptor CNR1. Hemopressin-binding efficiently blocks cannabinoid receptor CNR1 and subsequent signaling. The chain is Hemoglobin subunit alpha (HBA) from Panthera onca (Jaguar).